Consider the following 218-residue polypeptide: MKIILFGPPGVGKGTQAKILSEKHQLAHISTGDMLRSAIKQGTELGLKAKSFIDKGELVPDDVIIGMIEEYVSVQENREQGFILDGFPRTVPQAEALDRLLQKYEIPIDCVISLTADAEEIVARLSGRRIAPSTGKVYHVVYNPPKVEGKCDETGEDLIIREDDKEETIRKRLSIYDQTTAPVLDYYKKKGTAAEVDGTQSIDKVSKEIDEILTSATK.

10-15 provides a ligand contact to ATP; sequence GVGKGT. The segment at 30 to 59 is NMP; that stretch reads STGDMLRSAIKQGTELGLKAKSFIDKGELV. AMP is bound by residues threonine 31, arginine 36, 57–59, 86–89, and glutamine 93; these read ELV and GFPR. The interval 127–164 is LID; the sequence is GRRIAPSTGKVYHVVYNPPKVEGKCDETGEDLIIREDD. ATP-binding positions include arginine 128 and 137–138; that span reads VY. 2 residues coordinate AMP: arginine 161 and arginine 172. Residue glutamine 200 participates in ATP binding.

The protein belongs to the adenylate kinase family. Monomer.

It is found in the cytoplasm. It carries out the reaction AMP + ATP = 2 ADP. The protein operates within purine metabolism; AMP biosynthesis via salvage pathway; AMP from ADP: step 1/1. In terms of biological role, catalyzes the reversible transfer of the terminal phosphate group between ATP and AMP. Plays an important role in cellular energy homeostasis and in adenine nucleotide metabolism. This is Adenylate kinase from Chloroherpeton thalassium (strain ATCC 35110 / GB-78).